Reading from the N-terminus, the 399-residue chain is MKVLVLNSGSSSLKYQFIDTETEVALCKGVVDRIGLPGAFIRHQKNGQEIIKEQEVKDHNVAIKLVLEMLTHPQMGIIKSMDEIDAIGHRVVHGGEYFSDAVIVNEEVKKAIRECIEFAPLHNPANLMGIEACEKEIPGKPNVAVFDTAFHQTMPKYAYMYSLPYEVYEKYKIRKYGFHGTSHKYVAIKAAEYLKRPLKELKLITCHLGNGSSVCAIKYGKSVDTSMGFTPLAGLAMGTRSGTIDPAVILYLMEKENMDVKQMNDLLNKKSGVLGISGVSSDFRDLEKAANEGNERAQLAIDMFCYRVKKYIGEYAAVLGGVDAIIFTAGIGENNPIVREKCVTDLEYMGVLYDKQKNFNAEKGKVFEINKPESKVKVLIVPTNEELMIARETKRLLEK.

N7 contributes to the Mg(2+) binding site. Residue K14 participates in ATP binding. R90 is a binding site for substrate. D147 serves as the catalytic Proton donor/acceptor. Residues 207-211, 282-284, and 330-334 contribute to the ATP site; these read HLGNG, DFR, and GIGEN. E385 contacts Mg(2+).

Belongs to the acetokinase family. In terms of assembly, homodimer. Requires Mg(2+) as cofactor. It depends on Mn(2+) as a cofactor.

The protein localises to the cytoplasm. It catalyses the reaction acetate + ATP = acetyl phosphate + ADP. Its pathway is metabolic intermediate biosynthesis; acetyl-CoA biosynthesis; acetyl-CoA from acetate: step 1/2. Its function is as follows. Catalyzes the formation of acetyl phosphate from acetate and ATP. Can also catalyze the reverse reaction. This chain is Acetate kinase, found in Caldicellulosiruptor saccharolyticus (strain ATCC 43494 / DSM 8903 / Tp8T 6331).